The following is a 56-amino-acid chain: Ovomucoid (56 aa).

Residues 6–56 (VDCSEYPKPDCTTEERPLCGSDNKTYGNKCNFCNAVVESNGTLTLSHFGKC) form the Kazal-like domain. 3 disulfide bridges follow: C8/C38, C16/C35, and C24/C56. N45 carries an N-linked (GlcNAc...) asparagine glycan.

It localises to the secreted. The protein is Ovomucoid of Francolinus pondicerianus (Grey francolin).